We begin with the raw amino-acid sequence, 296 residues long: Phosphatidylserine decarboxylase proenzyme (296 aa).

Residues Asp-113, His-169, and Ser-256 each act as charge relay system; for autoendoproteolytic cleavage activity in the active site. Ser-256 acts as the Schiff-base intermediate with substrate; via pyruvic acid; for decarboxylase activity in catalysis. Ser-256 is modified (pyruvic acid (Ser); by autocatalysis).

This sequence belongs to the phosphatidylserine decarboxylase family. PSD-B subfamily. Prokaryotic type II sub-subfamily. In terms of assembly, heterodimer of a large membrane-associated beta subunit and a small pyruvoyl-containing alpha subunit. Pyruvate serves as cofactor. In terms of processing, is synthesized initially as an inactive proenzyme. Formation of the active enzyme involves a self-maturation process in which the active site pyruvoyl group is generated from an internal serine residue via an autocatalytic post-translational modification. Two non-identical subunits are generated from the proenzyme in this reaction, and the pyruvate is formed at the N-terminus of the alpha chain, which is derived from the carboxyl end of the proenzyme. The autoendoproteolytic cleavage occurs by a canonical serine protease mechanism, in which the side chain hydroxyl group of the serine supplies its oxygen atom to form the C-terminus of the beta chain, while the remainder of the serine residue undergoes an oxidative deamination to produce ammonia and the pyruvoyl prosthetic group on the alpha chain. During this reaction, the Ser that is part of the protease active site of the proenzyme becomes the pyruvoyl prosthetic group, which constitutes an essential element of the active site of the mature decarboxylase.

Its subcellular location is the cell membrane. The catalysed reaction is a 1,2-diacyl-sn-glycero-3-phospho-L-serine + H(+) = a 1,2-diacyl-sn-glycero-3-phosphoethanolamine + CO2. Its pathway is phospholipid metabolism; phosphatidylethanolamine biosynthesis; phosphatidylethanolamine from CDP-diacylglycerol: step 2/2. In terms of biological role, catalyzes the formation of phosphatidylethanolamine (PtdEtn) from phosphatidylserine (PtdSer). The polypeptide is Phosphatidylserine decarboxylase proenzyme (Clostridium kluyveri (strain ATCC 8527 / DSM 555 / NBRC 12016 / NCIMB 10680 / K1)).